A 259-amino-acid polypeptide reads, in one-letter code: uncharacterized protein (259 aa).

Belongs to the BtpA family.

This is an uncharacterized protein from Pyrococcus horikoshii (strain ATCC 700860 / DSM 12428 / JCM 9974 / NBRC 100139 / OT-3).